A 121-amino-acid polypeptide reads, in one-letter code: Group 1 truncated hemoglobin (121 aa).

At Met1 the chain carries N-acetylmethionine. Position 73 (His73) interacts with heme.

The protein belongs to the truncated hemoglobin family. Group I subfamily. Monomer. It depends on heme as a cofactor.

This is Group 1 truncated hemoglobin from Tetrahymena thermophila.